The sequence spans 737 residues: Catalase-peroxidase (737 aa).

The segment at residues tryptophan 102–tyrosine 225 is a cross-link (tryptophyl-tyrosyl-methioninium (Trp-Tyr) (with M-251)). Residue histidine 103 is the Proton acceptor of the active site. A cross-link (tryptophyl-tyrosyl-methioninium (Tyr-Met) (with W-102)) is located at residues tyrosine 225–methionine 251. Histidine 266 is a heme b binding site.

The protein belongs to the peroxidase family. Peroxidase/catalase subfamily. In terms of assembly, homodimer or homotetramer. The cofactor is heme b. In terms of processing, formation of the three residue Trp-Tyr-Met cross-link is important for the catalase, but not the peroxidase activity of the enzyme.

It catalyses the reaction H2O2 + AH2 = A + 2 H2O. The enzyme catalyses 2 H2O2 = O2 + 2 H2O. In terms of biological role, bifunctional enzyme with both catalase and broad-spectrum peroxidase activity. This Caulobacter sp. (strain K31) protein is Catalase-peroxidase.